We begin with the raw amino-acid sequence, 381 residues long: Succinyl-diaminopimelate desuccinylase (381 aa).

A Zn(2+)-binding site is contributed by H71. D73 is a catalytic residue. D104 is a binding site for Zn(2+). E138 functions as the Proton acceptor in the catalytic mechanism. Zn(2+) is bound by residues E139, E167, and H353.

It belongs to the peptidase M20A family. DapE subfamily. In terms of assembly, homodimer. Zn(2+) is required as a cofactor. The cofactor is Co(2+).

It carries out the reaction N-succinyl-(2S,6S)-2,6-diaminopimelate + H2O = (2S,6S)-2,6-diaminopimelate + succinate. Its pathway is amino-acid biosynthesis; L-lysine biosynthesis via DAP pathway; LL-2,6-diaminopimelate from (S)-tetrahydrodipicolinate (succinylase route): step 3/3. In terms of biological role, catalyzes the hydrolysis of N-succinyl-L,L-diaminopimelic acid (SDAP), forming succinate and LL-2,6-diaminopimelate (DAP), an intermediate involved in the bacterial biosynthesis of lysine and meso-diaminopimelic acid, an essential component of bacterial cell walls. The sequence is that of Succinyl-diaminopimelate desuccinylase from Shewanella halifaxensis (strain HAW-EB4).